The sequence spans 291 residues: Malectin (291 aa).

Residues 1-30 (MLRPRGAEGTAVALLRLLLLLLLLGPKLRG) form the signal peptide. Residues 31 to 268 (PGLGVVGAAG…TPNPYASDNS (238 aa)) are Lumenal-facing. The a carbohydrate site is built by Y81, Y103, Y130, F131, and D200. The segment at 220–264 (LQPHPGLEKKEEEEEEEEYDEGSNLKRQTNKNRVQSGPRTPNPYA) is disordered. The segment covering 230–240 (EEEEEEEEYDE) has biased composition (acidic residues). Polar residues predominate over residues 244–264 (LKRQTNKNRVQSGPRTPNPYA). N267 carries an N-linked (GlcNAc...) asparagine glycan. A helical transmembrane segment spans residues 269 to 289 (SLMFPILVAFGVFIPTLFCLC). Residues 290–291 (RL) lie on the Cytoplasmic side of the membrane.

This sequence belongs to the malectin family. In terms of assembly, interacts with the oligosaccharyltransferase (OST) complex.

The protein localises to the endoplasmic reticulum membrane. In terms of biological role, carbohydrate-binding protein with a strong ligand preference for Glc2-N-glycan. May play a role in the early steps of protein N-glycosylation. The chain is Malectin from Mus musculus (Mouse).